Reading from the N-terminus, the 244-residue chain is DNA repair protein RecO (244 aa).

This sequence belongs to the RecO family.

Involved in DNA repair and RecF pathway recombination. This chain is DNA repair protein RecO, found in Nocardioides sp. (strain ATCC BAA-499 / JS614).